A 160-amino-acid polypeptide reads, in one-letter code: Putative antiporter subunit mnhE2 (160 aa).

The next 3 helical transmembrane spans lie at 23 to 43, 55 to 75, and 100 to 120; these read FKFT…YILH, IWVA…SSIS, and SNWA…STVI.

It belongs to the CPA3 antiporters (TC 2.A.63) subunit E family. In terms of assembly, may form a heterooligomeric complex that consists of seven subunits: mnhA2, mnhB2, mnhC2, mnhD2, mnhE2, mnhF2 and mnhG2.

It is found in the cell membrane. The polypeptide is Putative antiporter subunit mnhE2 (mnhE2) (Staphylococcus epidermidis (strain ATCC 35984 / DSM 28319 / BCRC 17069 / CCUG 31568 / BM 3577 / RP62A)).